A 248-amino-acid polypeptide reads, in one-letter code: DNA-directed RNA polymerase subunit Rpo3 (248 aa).

It belongs to the archaeal Rpo3/eukaryotic RPB3 RNA polymerase subunit family. As to quaternary structure, part of the RNA polymerase complex.

It localises to the cytoplasm. The catalysed reaction is RNA(n) + a ribonucleoside 5'-triphosphate = RNA(n+1) + diphosphate. DNA-dependent RNA polymerase (RNAP) catalyzes the transcription of DNA into RNA using the four ribonucleoside triphosphates as substrates. The protein is DNA-directed RNA polymerase subunit Rpo3 of Halobacterium salinarum (strain ATCC 29341 / DSM 671 / R1).